The chain runs to 505 residues: Elsinochrome transporter 1 (505 aa).

The span at 1–10 shows a compositional bias: gly residues; sequence MALSGLGSGP. Residues 1–25 form a disordered region; that stretch reads MALSGLGSGPEGNPNNHQGKAIPTL. Residues 35 to 55 form a helical membrane-spanning segment; that stretch reads FLFSWVSFLVPFWSWYPFSPL. N-linked (GlcNAc...) asparagine glycosylation is found at Asn64 and Asn80. The interval 221-295 is disordered; sequence DTPTGAGKPP…TEKGESLPLT (75 aa). The segment covering 255-267 has biased composition (low complexity); it reads TPSSPDRSSSTNS. The next 6 helical transmembrane spans lie at 313–333, 348–368, 391–411, 417–437, 449–469, and 479–499; these read VIFS…FGAE, LGLG…LNIV, KALL…IGLA, ATLV…ANGL, VVSG…AIVF, and VFWI…WIKP.

It belongs to the major facilitator superfamily. Nitrate/nitrite porter (TC 2.A.1.8) family.

Its subcellular location is the cell membrane. Functionally, major facilitator-type transporter; part of the gene cluster that mediates the biosynthesis of elsinochromes, pigments consisting of at least four interconvertible tautomers (A, B, C and D) that have a core phenolic quinone to which various side chains are attached and which play an important role in fungal pathogenesis. Once elsinochrome is synthesized, it must be exported outside the fungal cells, which is probably accomplished by the ECT1 transporter, to avoid toxicity. The polypeptide is Elsinochrome transporter 1 (Elsinoe fawcettii (Citrus scab fungus)).